The sequence spans 229 residues: MNSMKFPLLDRTTQSSVISTTLNDLSNWSRLSSLWPLLYGTSCCFIEFASLIGSRFDFDRYGLVPRSSPRQADLILTAGTVTMKMAPSLVRLYEQMPEPKYVIAMGACTITGGMFSTDSYSTVRGVDKLIPVDVYLPGCPPKPEAILDAITKLRKKVSREIYEDKIGSQRENRYFTTNHKFHVPKSHVGRSTHIENYDQGLLSQSSSTPEIASENFFKYKSLVPNYDMN.

[4Fe-4S] cluster-binding residues include Cys-43, Cys-44, Cys-108, and Cys-139.

Belongs to the complex I 20 kDa subunit family. In terms of assembly, NDH is composed of at least 16 different subunits, 5 of which are encoded in the nucleus. [4Fe-4S] cluster serves as cofactor.

It is found in the plastid. The protein localises to the chloroplast thylakoid membrane. It catalyses the reaction a plastoquinone + NADH + (n+1) H(+)(in) = a plastoquinol + NAD(+) + n H(+)(out). It carries out the reaction a plastoquinone + NADPH + (n+1) H(+)(in) = a plastoquinol + NADP(+) + n H(+)(out). Functionally, NDH shuttles electrons from NAD(P)H:plastoquinone, via FMN and iron-sulfur (Fe-S) centers, to quinones in the photosynthetic chain and possibly in a chloroplast respiratory chain. The immediate electron acceptor for the enzyme in this species is believed to be plastoquinone. Couples the redox reaction to proton translocation, and thus conserves the redox energy in a proton gradient. The chain is NAD(P)H-quinone oxidoreductase subunit K, chloroplastic from Piper cenocladum (Ant piper).